The sequence spans 413 residues: 2,3-bisphosphoglycerate-independent phosphoglycerate mutase (413 aa).

Belongs to the BPG-independent phosphoglycerate mutase family. A-PGAM subfamily.

It catalyses the reaction (2R)-2-phosphoglycerate = (2R)-3-phosphoglycerate. It functions in the pathway carbohydrate degradation; glycolysis; pyruvate from D-glyceraldehyde 3-phosphate: step 3/5. Functionally, catalyzes the interconversion of 2-phosphoglycerate and 3-phosphoglycerate. The polypeptide is 2,3-bisphosphoglycerate-independent phosphoglycerate mutase (Sulfolobus acidocaldarius (strain ATCC 33909 / DSM 639 / JCM 8929 / NBRC 15157 / NCIMB 11770)).